Consider the following 505-residue polypeptide: Mannosyl-oligosaccharide alpha-1,2-mannosidase 1B (505 aa).

Residues 1–16 form the signal peptide; sequence MRTLLALAALAGFAAA. Asparagine 88 and asparagine 174 each carry an N-linked (GlcNAc...) asparagine glycan. A disulfide bond links cysteine 325 and cysteine 354. Asparagine 359 carries an N-linked (GlcNAc...) asparagine glycan. Catalysis depends on glutamate 368, which acts as the Proton donor. Threonine 494 lines the Ca(2+) pocket.

This sequence belongs to the glycosyl hydrolase 47 family. Monomer. Requires Ca(2+) as cofactor. The cofactor is Mg(2+).

It localises to the cytoplasmic vesicle lumen. The enzyme catalyses N(4)-(alpha-D-Man-(1-&gt;2)-alpha-D-Man-(1-&gt;2)-alpha-D-Man-(1-&gt;3)-[alpha-D-Man-(1-&gt;2)-alpha-D-Man-(1-&gt;3)-[alpha-D-Man-(1-&gt;2)-alpha-D-Man-(1-&gt;6)]-alpha-D-Man-(1-&gt;6)]-beta-D-Man-(1-&gt;4)-beta-D-GlcNAc-(1-&gt;4)-beta-D-GlcNAc)-L-asparaginyl-[protein] (N-glucan mannose isomer 9A1,2,3B1,2,3) + 4 H2O = N(4)-(alpha-D-Man-(1-&gt;3)-[alpha-D-Man-(1-&gt;3)-[alpha-D-Man-(1-&gt;6)]-alpha-D-Man-(1-&gt;6)]-beta-D-Man-(1-&gt;4)-beta-D-GlcNAc-(1-&gt;4)-beta-D-GlcNAc)-L-asparaginyl-[protein] (N-glucan mannose isomer 5A1,2) + 4 beta-D-mannose. The catalysed reaction is N(4)-(alpha-D-Man-(1-&gt;2)-alpha-D-Man-(1-&gt;2)-alpha-D-Man-(1-&gt;3)-[alpha-D-Man-(1-&gt;3)-[alpha-D-Man-(1-&gt;2)-alpha-D-Man-(1-&gt;6)]-alpha-D-Man-(1-&gt;6)]-beta-D-Man-(1-&gt;4)-beta-D-GlcNAc-(1-&gt;4)-beta-D-GlcNAc)-L-asparaginyl-[protein] (N-glucan mannose isomer 8A1,2,3B1,3) + 3 H2O = N(4)-(alpha-D-Man-(1-&gt;3)-[alpha-D-Man-(1-&gt;3)-[alpha-D-Man-(1-&gt;6)]-alpha-D-Man-(1-&gt;6)]-beta-D-Man-(1-&gt;4)-beta-D-GlcNAc-(1-&gt;4)-beta-D-GlcNAc)-L-asparaginyl-[protein] (N-glucan mannose isomer 5A1,2) + 3 beta-D-mannose. The protein operates within protein modification; protein glycosylation. Functionally, involved in the maturation of Asn-linked oligosaccharides. Progressively trims alpha-1,2-linked mannose residues from Man(9)GlcNAc(2) to produce Man(5)GlcNAc(2). This chain is Mannosyl-oligosaccharide alpha-1,2-mannosidase 1B (mns1B), found in Emericella nidulans (strain FGSC A4 / ATCC 38163 / CBS 112.46 / NRRL 194 / M139) (Aspergillus nidulans).